The following is a 379-amino-acid chain: Cathepsin B-like cysteine proteinase 6 (379 aa).

A signal peptide spans 1 to 16 (MKTLLFLSCIVVAAYC). Residues 17 to 104 (ACNDNLESVL…LSKTKDLDLD (88 aa)) constitute a propeptide that is removed on maturation. Disulfide bonds link Cys118-Cys147, Cys130-Cys174, Cys166-Cys233, Cys167-Cys170, Cys203-Cys237, and Cys211-Cys223. Cys133 is a catalytic residue. An N-linked (GlcNAc...) asparagine glycan is attached at Asn196. The N-linked (GlcNAc...) asparagine; atypical glycan is linked to Asn201. Active-site residues include His305 and Asn325.

This sequence belongs to the peptidase C1 family.

The protein is Cathepsin B-like cysteine proteinase 6 (cpr-6) of Caenorhabditis elegans.